Reading from the N-terminus, the 208-residue chain is Holliday junction resolvase RecU (208 aa).

Residues Thr-86, Asp-88, Glu-101, and Gln-120 each contribute to the Mg(2+) site.

Belongs to the RecU family. Mg(2+) is required as a cofactor.

The protein localises to the cytoplasm. It carries out the reaction Endonucleolytic cleavage at a junction such as a reciprocal single-stranded crossover between two homologous DNA duplexes (Holliday junction).. Functionally, endonuclease that resolves Holliday junction intermediates in genetic recombination. Cleaves mobile four-strand junctions by introducing symmetrical nicks in paired strands. Promotes annealing of linear ssDNA with homologous dsDNA. Required for DNA repair, homologous recombination and chromosome segregation. The sequence is that of Holliday junction resolvase RecU from Lacticaseibacillus casei (strain BL23) (Lactobacillus casei).